Reading from the N-terminus, the 32-residue chain is 24 kDa flagellin (32 aa).

The protein belongs to the archaeal flagellin family. In terms of processing, glycosylated.

It localises to the archaeal flagellum. Functionally, flagellin is the subunit protein which polymerizes to form the filaments of archaeal flagella. In Methanospirillum hungatei, this protein is 24 kDa flagellin.